Consider the following 109-residue polypeptide: Ribonuclease P protein component 4 (109 aa).

Zn(2+) contacts are provided by Cys-65, Cys-68, Cys-94, and Cys-97.

The protein belongs to the eukaryotic/archaeal RNase P protein component 4 family. Consists of a catalytic RNA component and at least 4-5 protein subunits. Zn(2+) serves as cofactor.

It localises to the cytoplasm. The enzyme catalyses Endonucleolytic cleavage of RNA, removing 5'-extranucleotides from tRNA precursor.. In terms of biological role, part of ribonuclease P, a protein complex that generates mature tRNA molecules by cleaving their 5'-ends. In Methanococcus vannielii (strain ATCC 35089 / DSM 1224 / JCM 13029 / OCM 148 / SB), this protein is Ribonuclease P protein component 4.